A 634-amino-acid polypeptide reads, in one-letter code: CREB-regulated transcription coactivator 1 (634 aa).

Phosphoserine occurs at positions 64 and 113. Disordered regions lie at residues 110–174, 191–221, 258–331, and 357–479; these read RLGS…GSQD, TTSE…VPGI, LPTP…TLSP, and QAGS…HTST. A Phosphothreonine modification is found at threonine 149. Residue serine 151 is modified to Phosphoserine; by SIK1 and SIK2. Polar residues predominate over residues 151 to 174; the sequence is SDSALHQSTMTPTQPESFSSGSQD. Threonine 161 bears the Phosphothreonine mark. The segment covering 194–208 has biased composition (basic and acidic residues); that stretch reads EADKNLSKQAWDTKK. The short motif at 242–258 is the Nuclear export signal element; sequence TGGSLPDLTNIHFPSPL. Composition is skewed to polar residues over residues 271 to 283, 296 to 305, and 314 to 331; these read ALSS…NLAA, GMSTPGSSPQ, and LSLS…TLSP. The span at 362-397 shows a compositional bias: pro residues; it reads QPPPQPQPPPPPPPASQQPPPPPPPQAPVRLPPGGP. Over residues 446–479 the composition is skewed to polar residues; sequence QYRTSAGSPANQSPTSPVSNQGFSPGSSPQHTST.

Belongs to the TORC family. In terms of assembly, binds, as a tetramer, through its N-terminal region, with the bZIP domain of CREB1. 'Arg-314' in the bZIP domain of CREB1 is essential for this interaction. Interaction, via its C-terminal, with TAF4, enhances recruitment of TAF4 to CREB1. Interacts with 14-3-3 proteins, including YWHAE/14-3-3 epsilon. Interacts with calmodulin-dependent catalytic subunit PPP3CA/calcineurin A. As to quaternary structure, (Microbial infection) Interacts with HTLV1 Tax. In terms of processing, phosphorylation/dephosphorylation states of Ser-151 are required for regulating transduction of CREB activity. TORCs are inactive when phosphorylated, and active when dephosphorylated at this site. This primary site of phosphorylation is mediated by SIKs (SIK1 and SIK2), is regulated by cAMP and calcium levels and is dependent on the phosphorylation of SIKs by LKB1. Highly expressed in adult and fetal brain. Located to specific regions such as the prefrontal cortex and cerebellum. Very low expression in other tissues such as heart, spleen, lung, skeletal muscle, salivary gland, ovary and kidney.

Its subcellular location is the cytoplasm. The protein resides in the nucleus. Functionally, transcriptional coactivator for CREB1 which activates transcription through both consensus and variant cAMP response element (CRE) sites. Acts as a coactivator, in the SIK/TORC signaling pathway, being active when dephosphorylated and acts independently of CREB1 'Ser-133' phosphorylation. Enhances the interaction of CREB1 with TAF4. Regulates the expression of specific CREB-activated genes such as the steroidogenic gene, StAR. Potent coactivator of PGC1alpha and inducer of mitochondrial biogenesis in muscle cells. In the hippocampus, involved in late-phase long-term potentiation (L-LTP) maintenance at the Schaffer collateral-CA1 synapses. May be required for dendritic growth of developing cortical neurons. In concert with SIK1, regulates the light-induced entrainment of the circadian clock. In response to light stimulus, coactivates the CREB-mediated transcription of PER1 which plays an important role in the photic entrainment of the circadian clock. In terms of biological role, (Microbial infection) Plays a role of coactivator for TAX activation of the human T-cell leukemia virus type 1 (HTLV-1) long terminal repeats (LTR). This Homo sapiens (Human) protein is CREB-regulated transcription coactivator 1.